A 539-amino-acid chain; its full sequence is Chaperonin GroEL (539 aa).

Residues 30-33 (TLGP), 87-91 (DGTTT), Gly-414, 479-481 (DAL), and Asp-495 each bind ATP.

It belongs to the chaperonin (HSP60) family. Forms a cylinder of 14 subunits composed of two heptameric rings stacked back-to-back. Interacts with the co-chaperonin GroES.

Its subcellular location is the cytoplasm. It catalyses the reaction ATP + H2O + a folded polypeptide = ADP + phosphate + an unfolded polypeptide.. Together with its co-chaperonin GroES, plays an essential role in assisting protein folding. The GroEL-GroES system forms a nano-cage that allows encapsulation of the non-native substrate proteins and provides a physical environment optimized to promote and accelerate protein folding. The sequence is that of Chaperonin GroEL from Caldicellulosiruptor saccharolyticus (strain ATCC 43494 / DSM 8903 / Tp8T 6331).